The following is an 893-amino-acid chain: Protein FAM186B (893 aa).

Disordered regions lie at residues 177 to 207 (GWQG…TMNT), 327 to 376 (QAED…PSPM), 537 to 557 (LEKE…DVER), 574 to 611 (LSLV…QRPM), and 806 to 827 (KPKK…GPTY). 2 stretches are compositionally biased toward polar residues: residues 179–188 (QGRSPQTSPS) and 197–207 (QMLQDQHTMNT). Residues 303-331 (RYHDLLLMKQALEFQLKKAQNATGQAEDL) are a coiled coil. Basic and acidic residues predominate over residues 342 to 353 (SERETLPRKETV).

This sequence belongs to the FAM186 family.

The chain is Protein FAM186B (FAM186B) from Homo sapiens (Human).